A 444-amino-acid polypeptide reads, in one-letter code: MSFDLNRRQLMISAATAAGALALGPARDAFGQARVQITEGNVAPLPIAIPNFVAGTPSDAEVGTGVSQVITNNLKRSGLFAPIDQAAYLEKITNIDVPPQFKSWASINAQALVTGRMTRQGDGRLKAEFRLWDVATGQQLAGQQYFTSPEYWRRIAHIISDQIYERLTGEKGYFDSRVVFIDESGPADRRVKRLALMDQDGANVRYLTRGSDLVLTPRFSPTNQEITYMEFGQGEPRVYLFNVETGQREIVGNFPGMSFAPRFSPDGQRIIMSLQQGGNSNLFVMDLRSKATTRLTDTPAIDTSPSYAPDGSRICFESDRGGKPQIYIMPASGGQAQRISFGDGSYSTPVWSPRGDYIAFTKQGGGQFAIGIMKPDGSGERILTSGFHNEGPTFAPNGRVLMFFRDPGGNAGPSLFTVDVSGRNELRVPTPGYASDPAWSPLLS.

The N-terminal stretch at 1-31 (MSFDLNRRQLMISAATAAGALALGPARDAFG) is a signal peptide.

The protein belongs to the TolB family. The Tol-Pal system is composed of five core proteins: the inner membrane proteins TolA, TolQ and TolR, the periplasmic protein TolB and the outer membrane protein Pal. They form a network linking the inner and outer membranes and the peptidoglycan layer.

It is found in the periplasm. Functionally, part of the Tol-Pal system, which plays a role in outer membrane invagination during cell division and is important for maintaining outer membrane integrity. In Rhodopseudomonas palustris (strain ATCC BAA-98 / CGA009), this protein is Tol-Pal system protein TolB.